Consider the following 191-residue polypeptide: Thymidylate kinase (191 aa).

Residue 7 to 14 (GIDTAGKS) participates in ATP binding.

The protein belongs to the thymidylate kinase family.

The enzyme catalyses dTMP + ATP = dTDP + ADP. In terms of biological role, phosphorylation of dTMP to form dTDP in both de novo and salvage pathways of dTTP synthesis. This chain is Thymidylate kinase, found in Sulfurimonas denitrificans (strain ATCC 33889 / DSM 1251) (Thiomicrospira denitrificans (strain ATCC 33889 / DSM 1251)).